Here is a 155-residue protein sequence, read N- to C-terminus: 6,7-dimethyl-8-ribityllumazine synthase (155 aa).

5-amino-6-(D-ribitylamino)uracil-binding positions include F22, 56 to 58 (AFE), and 80 to 82 (AVI). Residue 85–86 (ST) participates in (2S)-2-hydroxy-3-oxobutyl phosphate binding. H88 (proton donor) is an active-site residue. Position 113 (F113) interacts with 5-amino-6-(D-ribitylamino)uracil. R127 contributes to the (2S)-2-hydroxy-3-oxobutyl phosphate binding site.

It belongs to the DMRL synthase family.

The catalysed reaction is (2S)-2-hydroxy-3-oxobutyl phosphate + 5-amino-6-(D-ribitylamino)uracil = 6,7-dimethyl-8-(1-D-ribityl)lumazine + phosphate + 2 H2O + H(+). The protein operates within cofactor biosynthesis; riboflavin biosynthesis; riboflavin from 2-hydroxy-3-oxobutyl phosphate and 5-amino-6-(D-ribitylamino)uracil: step 1/2. Catalyzes the formation of 6,7-dimethyl-8-ribityllumazine by condensation of 5-amino-6-(D-ribitylamino)uracil with 3,4-dihydroxy-2-butanone 4-phosphate. This is the penultimate step in the biosynthesis of riboflavin. The polypeptide is 6,7-dimethyl-8-ribityllumazine synthase (Caldicellulosiruptor bescii (strain ATCC BAA-1888 / DSM 6725 / KCTC 15123 / Z-1320) (Anaerocellum thermophilum)).